Here is a 111-residue protein sequence, read N- to C-terminus: uncharacterized protein (111 aa).

This is an uncharacterized protein from Caenorhabditis elegans.